The following is a 300-amino-acid chain: Acetaldehyde dehydrogenase 3 (300 aa).

An NAD(+)-binding site is contributed by 11–14; it reads SGNI. Residue C126 is the Acyl-thioester intermediate of the active site. NAD(+)-binding positions include 157 to 165 and N276; that span reads SAGPGTRAN.

It belongs to the acetaldehyde dehydrogenase family.

The catalysed reaction is acetaldehyde + NAD(+) + CoA = acetyl-CoA + NADH + H(+). The polypeptide is Acetaldehyde dehydrogenase 3 (hsaG) (Rhodococcus jostii (strain RHA1)).